Reading from the N-terminus, the 372-residue chain is Envelope phospholipase OPG057 (372 aa).

Residues 153 to 156 (YPPL) carry the YPPL motif. Residues C185 and C186 are each lipidated (S-palmitoyl cysteine; by host). The PLD phosphodiesterase domain maps to 307-334 (FTIQNNTKLLIVDDEYVHITSANFDGTH).

The protein belongs to the orthopoxvirus OPG057 family. As to quaternary structure, interacts with protein OPG190. Palmitoylated. Attachment of the palmitate moiety is essential for correct intracellular targeting and protein function.

The protein resides in the virion membrane. The protein localises to the host Golgi apparatus. Its subcellular location is the host trans-Golgi network. It localises to the host endoplasmic reticulum membrane. The catalysed reaction is a 1,2-diacyl-sn-glycero-3-phosphocholine + H2O = a 1,2-diacyl-sn-glycero-3-phosphate + choline + H(+). In terms of biological role, major envelope protein that plays a role in the biogenesis of the viral double membrane and in egress of virus from the host cell. Produces the wrapped form of virus that is required for cell-to-cell spread. Acts as a lipase with broad specificity including phospholipase C, phospholipase A, and triacylglycerol lipase activities. This is Envelope phospholipase OPG057 (OPG057) from Homo sapiens (Human).